The following is a 496-amino-acid chain: MIKHNPPSPEPLHRAIARFGGVTVLVVGDLILDRFVNGVIERISPEAPIPVLHGRGETSAMGGAGNVVANIVSLGARAIPVSVIGTDTAGDSLVRMLAELGAETAGLSQQRGRMTSSKSRFSALNQQVLRFDEEEIKPLDETERAGLIRHFRAALAGAEIVILSDYGKGILLDGVAAELIAICREAGKPVLVDPKGRDYARYAGATAITPNRKELGEAVGHAVFADDEIVAAARELISAHGFDFVVATRSEKGMSVVGPDEARHIATQAREVFDVSGAGDTVIATFALALASGADPVAAASIANAAGGVVVGKRGTARLTVEELTGALFRSHGPTAHKDAILDASSAARMVAAWKEEGLSVGFTNGCFDILHAGHVSLLHAARSQCDRLVLGLNSDASVRRLKGPGRPVNDQHDRACVLAALASVDAVVVFEEDTPLALIEALLPDILVKGADYTIDTVVGADVVQKAGGRVVLVDLVAGKSTTGTIGKLRAGSTS.

Positions 1–335 (MIKHNPPSPE…GALFRSHGPT (335 aa)) are ribokinase. An ATP-binding site is contributed by 211 to 214 (NRKE). The active site involves aspartate 280. Residues 363 to 496 (FTNGCFDILH…IGKLRAGSTS (134 aa)) form a cytidylyltransferase region.

In the N-terminal section; belongs to the carbohydrate kinase PfkB family. This sequence in the C-terminal section; belongs to the cytidylyltransferase family. Homodimer.

The catalysed reaction is D-glycero-beta-D-manno-heptose 7-phosphate + ATP = D-glycero-beta-D-manno-heptose 1,7-bisphosphate + ADP + H(+). The enzyme catalyses D-glycero-beta-D-manno-heptose 1-phosphate + ATP + H(+) = ADP-D-glycero-beta-D-manno-heptose + diphosphate. It participates in nucleotide-sugar biosynthesis; ADP-L-glycero-beta-D-manno-heptose biosynthesis; ADP-L-glycero-beta-D-manno-heptose from D-glycero-beta-D-manno-heptose 7-phosphate: step 1/4. It functions in the pathway nucleotide-sugar biosynthesis; ADP-L-glycero-beta-D-manno-heptose biosynthesis; ADP-L-glycero-beta-D-manno-heptose from D-glycero-beta-D-manno-heptose 7-phosphate: step 3/4. Its function is as follows. Catalyzes the phosphorylation of D-glycero-D-manno-heptose 7-phosphate at the C-1 position to selectively form D-glycero-beta-D-manno-heptose-1,7-bisphosphate. Functionally, catalyzes the ADP transfer from ATP to D-glycero-beta-D-manno-heptose 1-phosphate, yielding ADP-D-glycero-beta-D-manno-heptose. This Mesorhizobium japonicum (strain LMG 29417 / CECT 9101 / MAFF 303099) (Mesorhizobium loti (strain MAFF 303099)) protein is Bifunctional protein HldE.